We begin with the raw amino-acid sequence, 491 residues long: uncharacterized protein (491 aa).

267–274 contributes to the ATP binding site; that stretch reads GIQGTGKS.

Belongs to the AAA ATPase family. Highly divergent.

Its subcellular location is the plastid. It localises to the chloroplast. This is an uncharacterized protein from Gracilaria tenuistipitata var. liui (Red alga).